Reading from the N-terminus, the 487-residue chain is MTFYGKDISGLHADLVAKKVSATELTKAAFDRIKATDDQVGAFLALNEEAALKQAAELDQAGIAEDQLLAGIPLAVKDNIVTKGLTTTAASKILENFKPVYDATVVEKLNAAGVINVGKVNLDEFAMGSSTENSAFKTTKNPWDLTRVPGGSSGGSAAAVAAGDVLGALGSDTGGSIRIPASFTGTVGMKPTYGRVSRWGLIAFGSSFDQIGWLTQSVKDNAILMSAIAGKDDRDMTSANQPVPDFAAGLNDQADIKGMKIAVPREYMEGLDDDVQEVIEASLKHLESLGATIDEVSLPHTKYGVPAYYILASSEASSNLQRFDGIRYGFRADDVKNLEDVYVKTRSQGFGDEVKLRIMLGTFSLSAGFYDAYFNKAAKVRRLIAQDFDDVLKDHDLIVGPTGTSTAFKIGAEIADPKQMYFNDVLTVTLNMAGLPGMSIPAGFSKDNGMPIGLQMIGKRFDEATIYKAGYVFEQTTDFHKQTPELG.

Active-site charge relay system residues include Lys77 and Ser152. The active-site Acyl-ester intermediate is Ser176.

Belongs to the amidase family. GatA subfamily. In terms of assembly, heterotrimer of A, B and C subunits.

The catalysed reaction is L-glutamyl-tRNA(Gln) + L-glutamine + ATP + H2O = L-glutaminyl-tRNA(Gln) + L-glutamate + ADP + phosphate + H(+). Functionally, allows the formation of correctly charged Gln-tRNA(Gln) through the transamidation of misacylated Glu-tRNA(Gln) in organisms which lack glutaminyl-tRNA synthetase. The reaction takes place in the presence of glutamine and ATP through an activated gamma-phospho-Glu-tRNA(Gln). The polypeptide is Glutamyl-tRNA(Gln) amidotransferase subunit A (Limosilactobacillus fermentum (strain NBRC 3956 / LMG 18251) (Lactobacillus fermentum)).